The primary structure comprises 424 residues: CinA-like protein (424 aa).

This sequence belongs to the CinA family.

This is CinA-like protein from Shewanella frigidimarina (strain NCIMB 400).